The following is a 226-amino-acid chain: CRISPR-associated endonuclease Cas3-HD (226 aa).

In terms of domain architecture, HD Cas3-type spans 9 to 204; it reads GRDCLQTYED…HVLTVCDNWG (196 aa). The Mg(2+) site is built by aspartate 56, histidine 74, histidine 101, and histidine 102.

The protein belongs to the CRISPR-associated nuclease Cas3-HD family. In terms of assembly, monomer. Can form a Cascade complex with Csa5, Cas7, Cas5a, Cas3 and Cas8a2. The cofactor is Mg(2+).

Functionally, CRISPR (clustered regularly interspaced short palindromic repeat), is an adaptive immune system that provides protection against mobile genetic elements (viruses, transposable elements and conjugative plasmids). CRISPR clusters contain sequences complementary to antecedent mobile elements and target invading nucleic acids. CRISPR clusters are transcribed and processed into CRISPR RNA (crRNA). Cas3 plus Cascade participate in CRISPR interference, the third stage of CRISPR immunity. Acts as a ssDNA and ssRNA nuclease, probably with both exo- and endonuclease activities. Activity is higher for DNA than RNA. The chain is CRISPR-associated endonuclease Cas3-HD (cas3') from Thermoproteus tenax (strain ATCC 35583 / DSM 2078 / JCM 9277 / NBRC 100435 / Kra 1).